Consider the following 382-residue polypeptide: Lipoyl synthase, mitochondrial (382 aa).

A mitochondrion-targeting transit peptide spans 1 to 30 (MHGRRHLAASLARALTYAPSRSISSTPSLL). A compositionally biased stretch (polar residues) spans 25-34 (STPSLLQTLD). The disordered stretch occupies residues 25–46 (STPSLLQTLDPSTPSPAAAPPT). [4Fe-4S] cluster is bound by residues Cys112, Cys117, Cys123, Cys143, Cys147, Cys150, and Ser359. The Radical SAM core domain occupies 128 to 348 (ETGTATATIM…RSLGVDMGFR (221 aa)).

This sequence belongs to the radical SAM superfamily. Lipoyl synthase family. [4Fe-4S] cluster serves as cofactor.

It is found in the mitochondrion. It catalyses the reaction [[Fe-S] cluster scaffold protein carrying a second [4Fe-4S](2+) cluster] + N(6)-octanoyl-L-lysyl-[protein] + 2 oxidized [2Fe-2S]-[ferredoxin] + 2 S-adenosyl-L-methionine + 4 H(+) = [[Fe-S] cluster scaffold protein] + N(6)-[(R)-dihydrolipoyl]-L-lysyl-[protein] + 4 Fe(3+) + 2 hydrogen sulfide + 2 5'-deoxyadenosine + 2 L-methionine + 2 reduced [2Fe-2S]-[ferredoxin]. Its pathway is protein modification; protein lipoylation via endogenous pathway; protein N(6)-(lipoyl)lysine from octanoyl-[acyl-carrier-protein]: step 2/2. Its function is as follows. Catalyzes the radical-mediated insertion of two sulfur atoms into the C-6 and C-8 positions of the octanoyl moiety bound to the lipoyl domains of lipoate-dependent enzymes, thereby converting the octanoylated domains into lipoylated derivatives. This Oryza sativa subsp. japonica (Rice) protein is Lipoyl synthase, mitochondrial.